The following is a 159-amino-acid chain: Crossover junction endodeoxyribonuclease RuvC (159 aa).

Active-site residues include D7, E67, and D139. D7, E67, and D139 together coordinate Mg(2+).

It belongs to the RuvC family. Homodimer which binds Holliday junction (HJ) DNA. The HJ becomes 2-fold symmetrical on binding to RuvC with unstacked arms; it has a different conformation from HJ DNA in complex with RuvA. In the full resolvosome a probable DNA-RuvA(4)-RuvB(12)-RuvC(2) complex forms which resolves the HJ. The cofactor is Mg(2+).

The protein localises to the cytoplasm. The enzyme catalyses Endonucleolytic cleavage at a junction such as a reciprocal single-stranded crossover between two homologous DNA duplexes (Holliday junction).. In terms of biological role, the RuvA-RuvB-RuvC complex processes Holliday junction (HJ) DNA during genetic recombination and DNA repair. Endonuclease that resolves HJ intermediates. Cleaves cruciform DNA by making single-stranded nicks across the HJ at symmetrical positions within the homologous arms, yielding a 5'-phosphate and a 3'-hydroxyl group; requires a central core of homology in the junction. The consensus cleavage sequence is 5'-(A/T)TT(C/G)-3'. Cleavage occurs on the 3'-side of the TT dinucleotide at the point of strand exchange. HJ branch migration catalyzed by RuvA-RuvB allows RuvC to scan DNA until it finds its consensus sequence, where it cleaves and resolves the cruciform DNA. The sequence is that of Crossover junction endodeoxyribonuclease RuvC from Orientia tsutsugamushi (strain Ikeda) (Rickettsia tsutsugamushi).